A 164-amino-acid polypeptide reads, in one-letter code: Transcriptional repressor NrdR (164 aa).

A zinc finger lies at 3–34 (CPKCNYHKSSVVDSRQAEDGNTIRRRRECEQC). The ATP-cone domain maps to 49–139 (LLVIKKDGTR…VYKSFKDVDE (91 aa)).

It belongs to the NrdR family. Zn(2+) is required as a cofactor.

Negatively regulates transcription of bacterial ribonucleotide reductase nrd genes and operons by binding to NrdR-boxes. This is Transcriptional repressor NrdR from Streptococcus pyogenes serotype M5 (strain Manfredo).